The sequence spans 85 residues: Large ribosomal subunit protein bL27 (85 aa).

The segment at 1-20 is disordered; sequence MATKKAGGSTRNGRDSEAKR.

This sequence belongs to the bacterial ribosomal protein bL27 family.

This is Large ribosomal subunit protein bL27 from Actinobacillus pleuropneumoniae serotype 5b (strain L20).